The following is a 150-amino-acid chain: UPF0506 protein SJCHGC09643 (150 aa).

The first 18 residues, 1 to 18 (MNTCIQLLILCLVTVINS), serve as a signal peptide directing secretion. N-linked (GlcNAc...) asparagine glycans are attached at residues asparagine 20, asparagine 32, asparagine 48, and asparagine 110. Disulfide bonds link cysteine 116-cysteine 130, cysteine 123-cysteine 134, and cysteine 129-cysteine 139.

The protein belongs to the UPF0506 family.

Its subcellular location is the secreted. The chain is UPF0506 protein SJCHGC09643 from Schistosoma japonicum (Blood fluke).